The sequence spans 320 residues: L-lactate dehydrogenase 2 (320 aa).

NAD(+) is bound by residues Val16, Asp37, Lys42, and Tyr69. Residue Arg94 coordinates substrate. Residues Ser107, 124–126, and Thr149 contribute to the NAD(+) site; that span reads VTN. 126–129 lines the substrate pocket; it reads NPVD. Position 154–157 (154–157) interacts with substrate; that stretch reads DTAR. Beta-D-fructose 1,6-bisphosphate-binding residues include Arg159 and His174. Residue His181 is the Proton acceptor of the active site. Thr235 contributes to the substrate binding site.

This sequence belongs to the LDH/MDH superfamily. LDH family. In terms of assembly, homotetramer.

It is found in the cytoplasm. It catalyses the reaction (S)-lactate + NAD(+) = pyruvate + NADH + H(+). Its pathway is fermentation; pyruvate fermentation to lactate; (S)-lactate from pyruvate: step 1/1. Allosterically activated by fructose 1,6-bisphosphate (FBP). Its function is as follows. Catalyzes the conversion of lactate to pyruvate. This Clostridium acetobutylicum (strain ATCC 824 / DSM 792 / JCM 1419 / IAM 19013 / LMG 5710 / NBRC 13948 / NRRL B-527 / VKM B-1787 / 2291 / W) protein is L-lactate dehydrogenase 2.